Here is a 272-residue protein sequence, read N- to C-terminus: Phosphatidylglycerol--prolipoprotein diacylglyceryl transferase (272 aa).

The next 4 helical transmembrane spans lie at 15 to 35, 53 to 73, 94 to 114, and 117 to 137; these read LGPL…LVLF, AFAV…WHVV, GLGF…IAKI, and VPPF…LCFA. R138 is a binding site for a 1,2-diacyl-sn-glycero-3-phospho-(1'-sn-glycerol). The next 3 membrane-spanning stretches (helical) occupy residues 174 to 194, 199 to 219, and 237 to 257; these read FHPI…ILLV, VFVK…VLYG, and FGLD…VLIA.

It belongs to the Lgt family.

It is found in the cell membrane. It carries out the reaction L-cysteinyl-[prolipoprotein] + a 1,2-diacyl-sn-glycero-3-phospho-(1'-sn-glycerol) = an S-1,2-diacyl-sn-glyceryl-L-cysteinyl-[prolipoprotein] + sn-glycerol 1-phosphate + H(+). Its pathway is protein modification; lipoprotein biosynthesis (diacylglyceryl transfer). Catalyzes the transfer of the diacylglyceryl group from phosphatidylglycerol to the sulfhydryl group of the N-terminal cysteine of a prolipoprotein, the first step in the formation of mature lipoproteins. The polypeptide is Phosphatidylglycerol--prolipoprotein diacylglyceryl transferase (Tropheryma whipplei (strain TW08/27) (Whipple's bacillus)).